The sequence spans 185 residues: Ribosome-recycling factor (185 aa).

Belongs to the RRF family.

It is found in the cytoplasm. In terms of biological role, responsible for the release of ribosomes from messenger RNA at the termination of protein biosynthesis. May increase the efficiency of translation by recycling ribosomes from one round of translation to another. This is Ribosome-recycling factor from Halorhodospira halophila (strain DSM 244 / SL1) (Ectothiorhodospira halophila (strain DSM 244 / SL1)).